The chain runs to 224 residues: UPF0758 protein Psyr_0222 (224 aa).

The MPN domain occupies 102–224 (ALENPTQVRS…PLSMVERGLM (123 aa)). Zn(2+) contacts are provided by histidine 173, histidine 175, and aspartate 186. The JAMM motif signature appears at 173 to 186 (HNHPSGITTPSRSD).

Belongs to the UPF0758 family.

The sequence is that of UPF0758 protein Psyr_0222 from Pseudomonas syringae pv. syringae (strain B728a).